A 57-amino-acid polypeptide reads, in one-letter code: UPF0391 membrane protein RPD_2934 (57 aa).

The next 2 membrane-spanning stretches (helical) occupy residues 6–26 and 35–55; these read WALI…TGVS and ILFY…FTIF.

It belongs to the UPF0391 family.

The protein resides in the cell membrane. This Rhodopseudomonas palustris (strain BisB5) protein is UPF0391 membrane protein RPD_2934.